The chain runs to 822 residues: Coiled-coil domain-containing protein 175 (822 aa).

Coiled coils occupy residues 129–164, 223–397, and 510–537; these read IIEI…EVLG, IEKQ…KQMM, and HLIE…IEEL.

The protein is Coiled-coil domain-containing protein 175 (Ccdc175) of Mus musculus (Mouse).